Here is a 349-residue protein sequence, read N- to C-terminus: Phosphoribosylformylglycinamidine cyclo-ligase (349 aa).

Belongs to the AIR synthase family.

The protein localises to the cytoplasm. It catalyses the reaction 2-formamido-N(1)-(5-O-phospho-beta-D-ribosyl)acetamidine + ATP = 5-amino-1-(5-phospho-beta-D-ribosyl)imidazole + ADP + phosphate + H(+). The protein operates within purine metabolism; IMP biosynthesis via de novo pathway; 5-amino-1-(5-phospho-D-ribosyl)imidazole from N(2)-formyl-N(1)-(5-phospho-D-ribosyl)glycinamide: step 2/2. The protein is Phosphoribosylformylglycinamidine cyclo-ligase of Bordetella parapertussis (strain 12822 / ATCC BAA-587 / NCTC 13253).